A 375-amino-acid chain; its full sequence is Carbamoyl phosphate synthase small chain (375 aa).

The segment at 1–186 (MRALLALEDG…LEPGGCAWVG (186 aa)) is CPSase. Residues Ser-45, Gly-238, and Gly-240 each contribute to the L-glutamine site. Residues 190 to 375 (RLVVYDFGIK…RNMVREAAGC (186 aa)) enclose the Glutamine amidotransferase type-1 domain. Cys-265 (nucleophile) is an active-site residue. Positions 266, 269, 307, 309, and 310 each coordinate L-glutamine. Residues His-348 and Glu-350 contribute to the active site.

The protein belongs to the CarA family. As to quaternary structure, composed of two chains; the small (or glutamine) chain promotes the hydrolysis of glutamine to ammonia, which is used by the large (or ammonia) chain to synthesize carbamoyl phosphate. Tetramer of heterodimers (alpha,beta)4.

The enzyme catalyses hydrogencarbonate + L-glutamine + 2 ATP + H2O = carbamoyl phosphate + L-glutamate + 2 ADP + phosphate + 2 H(+). It carries out the reaction L-glutamine + H2O = L-glutamate + NH4(+). It participates in amino-acid biosynthesis; L-arginine biosynthesis; carbamoyl phosphate from bicarbonate: step 1/1. Its pathway is pyrimidine metabolism; UMP biosynthesis via de novo pathway; (S)-dihydroorotate from bicarbonate: step 1/3. Small subunit of the glutamine-dependent carbamoyl phosphate synthetase (CPSase). CPSase catalyzes the formation of carbamoyl phosphate from the ammonia moiety of glutamine, carbonate, and phosphate donated by ATP, constituting the first step of 2 biosynthetic pathways, one leading to arginine and/or urea and the other to pyrimidine nucleotides. The small subunit (glutamine amidotransferase) binds and cleaves glutamine to supply the large subunit with the substrate ammonia. The chain is Carbamoyl phosphate synthase small chain from Nitratidesulfovibrio vulgaris (strain ATCC 29579 / DSM 644 / CCUG 34227 / NCIMB 8303 / VKM B-1760 / Hildenborough) (Desulfovibrio vulgaris).